The sequence spans 290 residues: Probable branched-chain-amino-acid aminotransferase (290 aa).

K155 bears the N6-(pyridoxal phosphate)lysine mark.

This sequence belongs to the class-IV pyridoxal-phosphate-dependent aminotransferase family. The cofactor is pyridoxal 5'-phosphate.

It carries out the reaction L-leucine + 2-oxoglutarate = 4-methyl-2-oxopentanoate + L-glutamate. The catalysed reaction is L-isoleucine + 2-oxoglutarate = (S)-3-methyl-2-oxopentanoate + L-glutamate. It catalyses the reaction L-valine + 2-oxoglutarate = 3-methyl-2-oxobutanoate + L-glutamate. Its pathway is amino-acid biosynthesis; L-isoleucine biosynthesis; L-isoleucine from 2-oxobutanoate: step 4/4. It functions in the pathway amino-acid biosynthesis; L-leucine biosynthesis; L-leucine from 3-methyl-2-oxobutanoate: step 4/4. The protein operates within amino-acid biosynthesis; L-valine biosynthesis; L-valine from pyruvate: step 4/4. In terms of biological role, acts on leucine, isoleucine and valine. The sequence is that of Probable branched-chain-amino-acid aminotransferase (ilvE) from Rickettsia conorii (strain ATCC VR-613 / Malish 7).